The primary structure comprises 88 residues: UPF0250 protein PM1928 (88 aa).

The protein belongs to the UPF0250 family.

The protein is UPF0250 protein PM1928 of Pasteurella multocida (strain Pm70).